The sequence spans 264 residues: Thiazole synthase (264 aa).

The active-site Schiff-base intermediate with DXP is the K106. 1-deoxy-D-xylulose 5-phosphate is bound by residues G167, 193–194 (AG), and 215–216 (NS).

Belongs to the ThiG family. In terms of assembly, homotetramer. Forms heterodimers with either ThiH or ThiS.

The protein localises to the cytoplasm. The catalysed reaction is [ThiS sulfur-carrier protein]-C-terminal-Gly-aminoethanethioate + 2-iminoacetate + 1-deoxy-D-xylulose 5-phosphate = [ThiS sulfur-carrier protein]-C-terminal Gly-Gly + 2-[(2R,5Z)-2-carboxy-4-methylthiazol-5(2H)-ylidene]ethyl phosphate + 2 H2O + H(+). It participates in cofactor biosynthesis; thiamine diphosphate biosynthesis. Its function is as follows. Catalyzes the rearrangement of 1-deoxy-D-xylulose 5-phosphate (DXP) to produce the thiazole phosphate moiety of thiamine. Sulfur is provided by the thiocarboxylate moiety of the carrier protein ThiS. In vitro, sulfur can be provided by H(2)S. This Pseudomonas fluorescens (strain Pf0-1) protein is Thiazole synthase.